Reading from the N-terminus, the 290-residue chain is Shikimate dehydrogenase (NADP(+)) (290 aa).

Residues 20–22 and Thr67 each bind shikimate; that span reads SLS. Catalysis depends on Lys71, which acts as the Proton acceptor. 2 residues coordinate shikimate: Asn92 and Asp107. NADP(+)-binding positions include 132–136 and Met228; that span reads GAGGA. Tyr230 contributes to the shikimate binding site. Gly251 is an NADP(+) binding site.

This sequence belongs to the shikimate dehydrogenase family. As to quaternary structure, homodimer.

It catalyses the reaction shikimate + NADP(+) = 3-dehydroshikimate + NADPH + H(+). Its pathway is metabolic intermediate biosynthesis; chorismate biosynthesis; chorismate from D-erythrose 4-phosphate and phosphoenolpyruvate: step 4/7. Involved in the biosynthesis of the chorismate, which leads to the biosynthesis of aromatic amino acids. Catalyzes the reversible NADPH linked reduction of 3-dehydroshikimate (DHSA) to yield shikimate (SA). This Geobacter sp. (strain M21) protein is Shikimate dehydrogenase (NADP(+)).